The chain runs to 106 residues: Large ribosomal subunit protein uL24 (106 aa).

It belongs to the universal ribosomal protein uL24 family. As to quaternary structure, part of the 50S ribosomal subunit.

Functionally, one of two assembly initiator proteins, it binds directly to the 5'-end of the 23S rRNA, where it nucleates assembly of the 50S subunit. One of the proteins that surrounds the polypeptide exit tunnel on the outside of the subunit. In Clostridium acetobutylicum (strain ATCC 824 / DSM 792 / JCM 1419 / IAM 19013 / LMG 5710 / NBRC 13948 / NRRL B-527 / VKM B-1787 / 2291 / W), this protein is Large ribosomal subunit protein uL24.